The following is a 623-amino-acid chain: Regulatory solute carrier protein family 1 member 1 (623 aa).

3 stretches are compositionally biased toward polar residues: residues 1–16 (MSSL…QAHP), 83–99 (CASS…PAIP), and 133–144 (EASLSVTTTRMQ). Disordered stretches follow at residues 1–48 (MSSL…PDSI), 71–99 (RKEQ…PAIP), 116–189 (SAEG…APHD), and 433–493 (EELT…PHCT). 3 stretches are compositionally biased toward basic and acidic residues: residues 150–159 (IGEKGWHPEY), 170–180 (QHEEPRNEQHE), and 460–473 (LVDK…RESV). Positions 474 to 491 (NESSLVTLDSAKTSNQPH) are enriched in polar residues. Residues 577-617 (IFPAADIDRILRAGFTLQEALGALHRVGGNADLALLVLLAK) form the UBA domain.

As to quaternary structure, interacts with YRDC. Renal outer cortex and outer medulla, small intestine and liver.

It localises to the cell membrane. The protein localises to the nucleus. The protein resides in the golgi apparatus. It is found in the trans-Golgi network. In terms of biological role, mediates transcriptional and post-transcriptional regulation of SLC5A1. Inhibits a dynamin and PKC-dependent exocytotic pathway of SLC5A1. Also involved in transcriptional regulation of SLC22A2. Exhibits glucose-dependent, short-term inhibition of SLC5A1 and SLC22A2 by inhibiting the release of vesicles from the trans-Golgi network. In Sus scrofa (Pig), this protein is Regulatory solute carrier protein family 1 member 1 (RSC1A1).